The primary structure comprises 199 residues: Pyridoxal 5'-phosphate synthase subunit PdxT (199 aa).

An L-glutamine-binding site is contributed by 51 to 53 (GES). Cys-83 acts as the Nucleophile in catalysis. L-glutamine-binding positions include Arg-110 and 137–138 (IR). Catalysis depends on charge relay system residues His-172 and Glu-174.

It belongs to the glutaminase PdxT/SNO family. In terms of assembly, in the presence of PdxS, forms a dodecamer of heterodimers. Only shows activity in the heterodimer.

The enzyme catalyses aldehydo-D-ribose 5-phosphate + D-glyceraldehyde 3-phosphate + L-glutamine = pyridoxal 5'-phosphate + L-glutamate + phosphate + 3 H2O + H(+). It carries out the reaction L-glutamine + H2O = L-glutamate + NH4(+). It participates in cofactor biosynthesis; pyridoxal 5'-phosphate biosynthesis. Catalyzes the hydrolysis of glutamine to glutamate and ammonia as part of the biosynthesis of pyridoxal 5'-phosphate. The resulting ammonia molecule is channeled to the active site of PdxS. The sequence is that of Pyridoxal 5'-phosphate synthase subunit PdxT from Thermoplasma volcanium (strain ATCC 51530 / DSM 4299 / JCM 9571 / NBRC 15438 / GSS1).